A 261-amino-acid chain; its full sequence is Protein TfpB (261 aa).

The chain is Protein TfpB (tfpB) from Moraxella bovis.